Reading from the N-terminus, the 329-residue chain is MLLNGIVAAVITMIITIIGIPRFIMFFHKKKLGGQPTLEDVKQHASKAGTPTMGGFVFVVVSLVVSLVAALVFGKFSPAFITAWWVFAMYAVIGFLDDFLKVFKQINEGLTAKQKMLAQILIGIVSYFIYSHGEKSHIIHILSWQVNIGIFFSIFIIIWLVGWSNAVNLTDGIDGLASITVAISLTAYAVIAVVHQQYDVLLIILSVIGGLLGFFVFNHKPAKIFMGDVGSLALGGFLAIVSILLHAEWTLLLIGAVYVIETLSVMLQVAYFKKTGGKRIFRMTPIHHHFELGGFSGKAAGWSEWKIDIVFWLFTAVLSVIALCIYFAF.

9 helical membrane passes run 1–21, 53–73, 76–96, 109–129, 141–161, 175–195, 198–218, 237–257, and 309–329; these read MLLN…IGIP, MGGF…ALVF, FSPA…IGFL, GLTA…SYFI, ILSW…IWLV, GLAS…AVVH, YDVL…FVFN, FLAI…IGAV, and IVFW…YFAF.

Belongs to the glycosyltransferase 4 family. MraY subfamily. The cofactor is Mg(2+).

The protein resides in the cell membrane. The enzyme catalyses UDP-N-acetyl-alpha-D-muramoyl-L-alanyl-gamma-D-glutamyl-L-lysyl-D-alanyl-D-alanine + di-trans,octa-cis-undecaprenyl phosphate = Mur2Ac(oyl-L-Ala-gamma-D-Glu-L-Lys-D-Ala-D-Ala)-di-trans,octa-cis-undecaprenyl diphosphate + UMP. Its pathway is cell wall biogenesis; peptidoglycan biosynthesis. Functionally, catalyzes the initial step of the lipid cycle reactions in the biosynthesis of the cell wall peptidoglycan: transfers peptidoglycan precursor phospho-MurNAc-pentapeptide from UDP-MurNAc-pentapeptide onto the lipid carrier undecaprenyl phosphate, yielding undecaprenyl-pyrophosphoryl-MurNAc-pentapeptide, known as lipid I. The sequence is that of Phospho-N-acetylmuramoyl-pentapeptide-transferase from Lactococcus lactis subsp. cremoris (strain MG1363).